The following is a 276-amino-acid chain: Large ribosomal subunit protein uL2 (276 aa).

The disordered stretch occupies residues arginine 211–lysine 276. The span at aspartate 230–lysine 240 shows a compositional bias: basic and acidic residues.

This sequence belongs to the universal ribosomal protein uL2 family. In terms of assembly, part of the 50S ribosomal subunit. Forms a bridge to the 30S subunit in the 70S ribosome.

Its function is as follows. One of the primary rRNA binding proteins. Required for association of the 30S and 50S subunits to form the 70S ribosome, for tRNA binding and peptide bond formation. It has been suggested to have peptidyltransferase activity; this is somewhat controversial. Makes several contacts with the 16S rRNA in the 70S ribosome. This Campylobacter jejuni subsp. doylei (strain ATCC BAA-1458 / RM4099 / 269.97) protein is Large ribosomal subunit protein uL2.